A 158-amino-acid polypeptide reads, in one-letter code: Transcriptional regulator MraZ (158 aa).

2 SpoVT-AbrB domains span residues 7-57 (THQN…PTAA) and 86-129 (AYPV…EPAA). A disordered region spans residues 133–158 (RRAEARTRSRQLALPAQGRRQGGADA).

It belongs to the MraZ family. Forms oligomers.

It is found in the cytoplasm. The protein localises to the nucleoid. This chain is Transcriptional regulator MraZ, found in Gluconacetobacter diazotrophicus (strain ATCC 49037 / DSM 5601 / CCUG 37298 / CIP 103539 / LMG 7603 / PAl5).